Here is a 107-residue protein sequence, read N- to C-terminus: Glutaredoxin 4 (107 aa).

In terms of domain architecture, Glutaredoxin spans 4 to 106; that stretch reads IDKIKQQINE…TLLKETATKH (103 aa). Lys-21 provides a ligand contact to glutathione. Position 29 (Cys-29) interacts with [2Fe-2S] cluster. Residues Arg-58, Phe-70, and 83-84 contribute to the glutathione site; that span reads CD.

This sequence belongs to the glutaredoxin family. Monothiol subfamily. In terms of assembly, homodimer.

It localises to the cytoplasm. Monothiol glutaredoxin involved in the biogenesis of iron-sulfur clusters. This chain is Glutaredoxin 4 (grxD), found in Haemophilus ducreyi (strain 35000HP / ATCC 700724).